A 192-amino-acid polypeptide reads, in one-letter code: Large ribosomal subunit protein uL6 (192 aa).

This sequence belongs to the universal ribosomal protein uL6 family. As to quaternary structure, part of the 50S ribosomal subunit.

This protein binds to the 23S rRNA, and is important in its secondary structure. It is located near the subunit interface in the base of the L7/L12 stalk, and near the tRNA binding site of the peptidyltransferase center. The polypeptide is Large ribosomal subunit protein uL6 (Nanoarchaeum equitans (strain Kin4-M)).